Reading from the N-terminus, the 272-residue chain is 3-methyl-2-oxobutanoate hydroxymethyltransferase (272 aa).

Residues Asp51 and Asp90 each contribute to the Mg(2+) site. 3-methyl-2-oxobutanoate-binding positions include 51–52, Asp90, and Lys119; that span reads DS. Glu121 is a binding site for Mg(2+). Glu188 serves as the catalytic Proton acceptor.

The protein belongs to the PanB family. Homodecamer; pentamer of dimers. Mg(2+) is required as a cofactor.

Its subcellular location is the cytoplasm. The catalysed reaction is 3-methyl-2-oxobutanoate + (6R)-5,10-methylene-5,6,7,8-tetrahydrofolate + H2O = 2-dehydropantoate + (6S)-5,6,7,8-tetrahydrofolate. The protein operates within cofactor biosynthesis; (R)-pantothenate biosynthesis; (R)-pantoate from 3-methyl-2-oxobutanoate: step 1/2. Functionally, catalyzes the reversible reaction in which hydroxymethyl group from 5,10-methylenetetrahydrofolate is transferred onto alpha-ketoisovalerate to form ketopantoate. The sequence is that of 3-methyl-2-oxobutanoate hydroxymethyltransferase from Dechloromonas aromatica (strain RCB).